The chain runs to 66 residues: Muscarinic toxin 1 (66 aa).

Intrachain disulfides connect C3/C24, C17/C42, C46/C58, and C59/C64.

The protein belongs to the three-finger toxin family. Short-chain subfamily. Aminergic toxin sub-subfamily. In terms of tissue distribution, expressed by the venom gland.

It is found in the secreted. Functionally, shows a non-competitive interaction with adrenergic and muscarinic receptors. Binds to alpha-2b (ADRA2B) (IC(50)=2.3 nM), alpha-1a (ADRA1A), alpha-1b (ADRA1B), and alpha-2c (ADRA2C) adrenergic receptors. Reversibly binds to M1 (CHRM1) muscarinic acetylcholine receptors, probably by interacting with the orthosteric site. Also reveals a slightly weaker effect at M3 (CHRM3) and M4 (CHRM4) receptors. The order of potency is ADRA2B&gt;&gt;CHRM1&gt;ADRA1A&gt;ADRA1B&gt;ADRA2C/CHRM4. This Dendroaspis angusticeps (Eastern green mamba) protein is Muscarinic toxin 1.